We begin with the raw amino-acid sequence, 317 residues long: Bile salt hydrolase/transferase (317 aa).

Residue Cys-2 is the Nucleophile; acyl-thioester intermediate of the active site. Residues Cys-2 and Arg-18 each contribute to the deoxycholate site. Residue Asn-82 participates in taurine binding.

It belongs to the peptidase C59 family. Homotetramer. The tetramer consists of a dimer of dimers.

The catalysed reaction is glycocholate + H2O = cholate + glycine. It catalyses the reaction glycodeoxycholate + H2O = deoxycholate + glycine. It carries out the reaction chenodeoxycholate + glycine = glycochenodeoxycholate + H2O. The enzyme catalyses cholate + taurine = taurocholate + H2O. The catalysed reaction is taurodeoxycholate + H2O = deoxycholate + taurine. It catalyses the reaction taurochenodeoxycholate + H2O = chenodeoxycholate + taurine. It carries out the reaction an L-alpha-amino acid + cholate = an N-choloyl-L-alpha-amino acid + H2O. The enzyme catalyses an L-alpha-amino acid + taurocholate = an N-choloyl-L-alpha-amino acid + taurine. The catalysed reaction is cholate + L-alanine = L-alanocholate + H2O. It catalyses the reaction taurocholate + L-alanine = L-alanocholate + taurine. It carries out the reaction cholate + L-serine = L-serocholate + H2O. The enzyme catalyses taurocholate + L-serine = L-serocholate + taurine. The catalysed reaction is cholate + L-histidine = L-histidocholate + H2O. It catalyses the reaction taurocholate + L-histidine = L-histidocholate + taurine. It participates in lipid metabolism; bile acid biosynthesis. With respect to regulation, hydrolase activity is competitively inhibited by the products cholate (CA) and deoxycholate (DCA), and by phenylacetate and 4-aminophenylacetate. Penicillin V and penicillin G show mixed inhibition. Strongly inhibited by thiol enzyme inhibitors in vitro. Functionally, possesses dual functions in bile acid metabolism. Acts as a bile salt hydrolase that catalyzes the deconjugation of glycine- and taurine-linked bile salts, which occurs naturally in the intestines of humans, releasing amino acid residues and deconjugated bile salts (bile acids). Can hydrolyze the amide bond in all six major human conjugated bile salts, namely glycocholate (GCA), glycodeoxycholate (GDCA), glycochenodeoxycholate (GCDCA), taurocholate (TCA), taurodeoxycholate (TDCA) and taurochenodeoxycholate (TCDCA). Shows a slight preference for glycine-conjugated bile acids as substrates. Also acts as an amine N-acyltransferase that conjugates a wide variety of amino acids to conjugated and non-conjugated bile acids, thus producing bacterial bile acid amidates (BBAAs) - also named microbially conjugated bile acids (MCBAs) - in the gastrointestinal tract. These BBAAs may facilitate communication between the microbiota and host through the activation of human ligand-activated transcription factors. Is totally inactive toward penicillin V. The sequence is that of Bile salt hydrolase/transferase from Bifidobacterium longum.